The following is a 192-amino-acid chain: Xanthine phosphoribosyltransferase (192 aa).

Residues Leu-20 and Asn-27 each coordinate xanthine. 5-phospho-alpha-D-ribose 1-diphosphate is bound at residue 128–132 (ANGDA). Lys-156 serves as a coordination point for xanthine.

This sequence belongs to the purine/pyrimidine phosphoribosyltransferase family. Xpt subfamily. As to quaternary structure, homodimer.

It localises to the cytoplasm. It carries out the reaction XMP + diphosphate = xanthine + 5-phospho-alpha-D-ribose 1-diphosphate. It participates in purine metabolism; XMP biosynthesis via salvage pathway; XMP from xanthine: step 1/1. Converts the preformed base xanthine, a product of nucleic acid breakdown, to xanthosine 5'-monophosphate (XMP), so it can be reused for RNA or DNA synthesis. This chain is Xanthine phosphoribosyltransferase, found in Staphylococcus aureus (strain JH1).